The primary structure comprises 732 residues: MTTESKCPFSGGGKPNTPRRGPSNQDWWPNQLSLKPLHQHSSLSDPMDPDFDYAKAFNSLDLAAVKQDLHALMTDSQEWWPADFGHYGGLFIRMAWHSAGTYRIGDGRGGAGEGQQRFAPLNSWPDNVSLDKARRLLWPIKQKYGRKISWADLIVLTGNVALESMGFKTFGYAGGRADTWEPDDVYWGSEKIWLELSGGQNSRYSGDRDLEDPLAAVQMGLIYVNPEGPDGNPDPVAAARDIRETFARMAMNDEETVALIAGGHTFGKTHGAGPASHVGDDPETAGLERQGLGWQSSFGTGKGKDAITSGLEVTWTTTPTQWNHDFFKHLFEYEWELTQSPAGAHQWVAKDVGETIPDAFDPAKKQRPTMLTTDLSLRFDPAYEKISRRFYEHPDQLADAFSRAWYKLTHRDMGPRARYLGPEVPAEELIWQDPIPAVDHQLINDQDIADLKTSILTSGLPISVLVSTAWASASTFRGSDKRGGANGARIRLAPQKDWAINQPAQLAQTLAKLEDIQQAFNNAQSGNKRVSLADLIVLAGAAAVEQAAANAGHPVSVPFTPGRMDATQEQTDVDSFEAMEPVADGFRNYLERQFNIPAEALLVDKAQLLTLTAPEMTVLVGGLRVLNANVGQSQHGVLTQRPQALSNDFFVNLLDMGTTWKAAGEDGVFEGQDSQTGALKWTATRADLIFGSHSQLRALAEVYGSSDAQASFVYDFVAAWNKVMNLDRFDLA.

The disordered stretch occupies residues 1–29 (MTTESKCPFSGGGKPNTPRRGPSNQDWWP). Residues 96-223 (WHSAGTYRIG…LAAVQMGLIY (128 aa)) constitute a cross-link (tryptophyl-tyrosyl-methioninium (Trp-Tyr) (with M-249)). Residue H97 is the Proton acceptor of the active site. A cross-link (tryptophyl-tyrosyl-methioninium (Tyr-Met) (with W-96)) is located at residues 223–249 (YVNPEGPDGNPDPVAAARDIRETFARM). H264 contributes to the heme b binding site.

It belongs to the peroxidase family. Peroxidase/catalase subfamily. In terms of assembly, homodimer or homotetramer. Requires heme b as cofactor. Formation of the three residue Trp-Tyr-Met cross-link is important for the catalase, but not the peroxidase activity of the enzyme.

It catalyses the reaction H2O2 + AH2 = A + 2 H2O. The catalysed reaction is 2 H2O2 = O2 + 2 H2O. Bifunctional enzyme with both catalase and broad-spectrum peroxidase activity. This is Catalase-peroxidase from Serratia proteamaculans (strain 568).